The primary structure comprises 434 residues: D-inositol 3-phosphate glycosyltransferase (434 aa).

A 1D-myo-inositol 3-phosphate-binding site is contributed by histidine 26. UDP-N-acetyl-alpha-D-glucosamine is bound by residues 32–33 (QP) and glycine 40. 1D-myo-inositol 3-phosphate is bound by residues 37–42 (DAGGMN), lysine 95, tyrosine 128, threonine 152, and arginine 172. Residues arginine 246 and lysine 251 each contribute to the UDP-N-acetyl-alpha-D-glucosamine site. Residues tyrosine 321, arginine 322, and alanine 324 each coordinate Mg(2+). 2 residues coordinate UDP-N-acetyl-alpha-D-glucosamine: glutamate 334 and glutamate 342. Threonine 348 contributes to the Mg(2+) binding site.

Belongs to the glycosyltransferase group 1 family. MshA subfamily. In terms of assembly, homodimer.

The enzyme catalyses 1D-myo-inositol 3-phosphate + UDP-N-acetyl-alpha-D-glucosamine = 1D-myo-inositol 2-acetamido-2-deoxy-alpha-D-glucopyranoside 3-phosphate + UDP + H(+). Catalyzes the transfer of a N-acetyl-glucosamine moiety to 1D-myo-inositol 3-phosphate to produce 1D-myo-inositol 2-acetamido-2-deoxy-glucopyranoside 3-phosphate in the mycothiol biosynthesis pathway. The chain is D-inositol 3-phosphate glycosyltransferase from Thermobifida fusca (strain YX).